Here is a 317-residue protein sequence, read N- to C-terminus: Transaldolase (317 aa).

The Schiff-base intermediate with substrate role is filled by Lys-125.

Belongs to the transaldolase family. Type 1 subfamily. In terms of assembly, homodimer.

Its subcellular location is the cytoplasm. The enzyme catalyses D-sedoheptulose 7-phosphate + D-glyceraldehyde 3-phosphate = D-erythrose 4-phosphate + beta-D-fructose 6-phosphate. It participates in carbohydrate degradation; pentose phosphate pathway; D-glyceraldehyde 3-phosphate and beta-D-fructose 6-phosphate from D-ribose 5-phosphate and D-xylulose 5-phosphate (non-oxidative stage): step 2/3. In terms of biological role, transaldolase is important for the balance of metabolites in the pentose-phosphate pathway. This chain is Transaldolase, found in Delftia acidovorans (strain DSM 14801 / SPH-1).